A 343-amino-acid chain; its full sequence is Phenylalanine--tRNA ligase alpha subunit (343 aa).

A Mg(2+)-binding site is contributed by E268.

It belongs to the class-II aminoacyl-tRNA synthetase family. Phe-tRNA synthetase alpha subunit type 1 subfamily. Tetramer of two alpha and two beta subunits. Mg(2+) serves as cofactor.

Its subcellular location is the cytoplasm. It catalyses the reaction tRNA(Phe) + L-phenylalanine + ATP = L-phenylalanyl-tRNA(Phe) + AMP + diphosphate + H(+). This Cupriavidus necator (strain ATCC 17699 / DSM 428 / KCTC 22496 / NCIMB 10442 / H16 / Stanier 337) (Ralstonia eutropha) protein is Phenylalanine--tRNA ligase alpha subunit.